The primary structure comprises 234 residues: Serum amyloid P-component (234 aa).

The N-terminal stretch at 1-22 (MDKLLSLLGVSILAGLLLEAFA) is a signal peptide. Residues 27–226 (TGKVFVFPRQ…YAVIRPRCVA (200 aa)) enclose the Pentraxin (PTX) domain. Residue Asn-54 is glycosylated (N-linked (GlcNAc...) asparagine). The cysteines at positions 58 and 117 are disulfide-linked. Ca(2+) is bound by residues Asn-81, Glu-158, Gln-159, Asp-160, and Gln-170.

The protein belongs to the pentraxin family. In terms of assembly, homopentamer. Pentraxin (or pentaxin) have a discoid arrangement of 5 non-covalently bound subunits. Requires Ca(2+) as cofactor.

It localises to the secreted. The polypeptide is Serum amyloid P-component (APCS) (Mesocricetus auratus (Golden hamster)).